A 65-amino-acid chain; its full sequence is Large ribosomal subunit protein bL35 (65 aa).

It belongs to the bacterial ribosomal protein bL35 family.

The polypeptide is Large ribosomal subunit protein bL35 (Paraburkholderia phytofirmans (strain DSM 17436 / LMG 22146 / PsJN) (Burkholderia phytofirmans)).